The primary structure comprises 538 residues: Protein phosphatase EYA2 (538 aa).

Residues 209–230 are compositionally biased toward polar residues; that stretch reads HNVPNQSSESLAGEYNTHNGPS. The tract at residues 209-263 is disordered; the sequence is HNVPNQSSESLAGEYNTHNGPSTPAKEGDTDRPHRASDGKLRGRSKRSSDPSPAG. A compositionally biased stretch (basic and acidic residues) spans 234-249; that stretch reads KEGDTDRPHRASDGKL. The Nucleophile role is filled by Asp274. The Mg(2+) site is built by Asp274, Asp276, and Asp502. Asp276 (proton donor) is an active-site residue.

The protein belongs to the HAD-like hydrolase superfamily. EYA family. As to quaternary structure, interacts with DACH2 and SIX1, and probably with SIX2, SIX4 and SIX5. Interacts with CAPN8. Interacts with GNAZ and GNAI2; this precludes interaction with SIX1. The cofactor is Mg(2+). Highest expression in muscle with lower levels in kidney, placenta, pancreas, brain and heart.

It is found in the cytoplasm. The protein localises to the nucleus. The catalysed reaction is O-phospho-L-tyrosyl-[protein] + H2O = L-tyrosyl-[protein] + phosphate. Functionally, functions both as protein phosphatase and as transcriptional coactivator for SIX1, and probably also for SIX2, SIX4 and SIX5. Tyrosine phosphatase that dephosphorylates 'Tyr-142' of histone H2AX (H2AXY142ph) and promotes efficient DNA repair via the recruitment of DNA repair complexes containing MDC1. 'Tyr-142' phosphorylation of histone H2AX plays a central role in DNA repair and acts as a mark that distinguishes between apoptotic and repair responses to genotoxic stress. Its function as histone phosphatase may contribute to its function in transcription regulation during organogenesis. Plays an important role in hypaxial muscle development together with SIX1 and DACH2; in this it is functionally redundant with EYA1. The protein is Protein phosphatase EYA2 (EYA2) of Homo sapiens (Human).